The chain runs to 257 residues: UPF0246 protein LPC_0782 (257 aa).

Belongs to the UPF0246 family.

The protein is UPF0246 protein LPC_0782 of Legionella pneumophila (strain Corby).